We begin with the raw amino-acid sequence, 427 residues long: UPF0229 protein YeaH (427 aa).

The segment covering 79-90 (NDHFIQNDRIER) has biased composition (basic and acidic residues). A disordered region spans residues 79–110 (NDHFIQNDRIERPQGGGGGSGSGQGQASQDGE). Gly residues predominate over residues 92–102 (QGGGGGSGSGQ).

Belongs to the UPF0229 family.

The protein is UPF0229 protein YeaH of Salmonella paratyphi B (strain ATCC BAA-1250 / SPB7).